The primary structure comprises 133 residues: UPF0768 protein C977.18 (133 aa).

The protein belongs to the UPF0768 family.

In Schizosaccharomyces pombe (strain 972 / ATCC 24843) (Fission yeast), this protein is UPF0768 protein C977.18.